Reading from the N-terminus, the 303-residue chain is tRNA pseudouridine synthase B (303 aa).

D47 acts as the Nucleophile in catalysis.

It belongs to the pseudouridine synthase TruB family. Type 1 subfamily.

It catalyses the reaction uridine(55) in tRNA = pseudouridine(55) in tRNA. Responsible for synthesis of pseudouridine from uracil-55 in the psi GC loop of transfer RNAs. In Legionella pneumophila (strain Lens), this protein is tRNA pseudouridine synthase B.